We begin with the raw amino-acid sequence, 319 residues long: Acetyl-coenzyme A carboxylase carboxyl transferase subunit alpha (319 aa).

A CoA carboxyltransferase C-terminal domain is found at 35–296; the sequence is DLDKEIEQLE…KATLVANLAE (262 aa).

Belongs to the AccA family. As to quaternary structure, acetyl-CoA carboxylase is a heterohexamer composed of biotin carboxyl carrier protein (AccB), biotin carboxylase (AccC) and two subunits each of ACCase subunit alpha (AccA) and ACCase subunit beta (AccD).

The protein resides in the cytoplasm. It carries out the reaction N(6)-carboxybiotinyl-L-lysyl-[protein] + acetyl-CoA = N(6)-biotinyl-L-lysyl-[protein] + malonyl-CoA. It functions in the pathway lipid metabolism; malonyl-CoA biosynthesis; malonyl-CoA from acetyl-CoA: step 1/1. Its function is as follows. Component of the acetyl coenzyme A carboxylase (ACC) complex. First, biotin carboxylase catalyzes the carboxylation of biotin on its carrier protein (BCCP) and then the CO(2) group is transferred by the carboxyltransferase to acetyl-CoA to form malonyl-CoA. This chain is Acetyl-coenzyme A carboxylase carboxyl transferase subunit alpha, found in Photobacterium profundum (strain SS9).